We begin with the raw amino-acid sequence, 360 residues long: Ankyrin repeat domain-containing protein 2 (360 aa).

Positions 5-120 (PSWAGVGALA…GIQNLIELRK (116 aa)) are may mediate interaction with PML, p53/TP53 and YBX1. The residue at position 99 (Ser-99) is a Phosphoserine; by PKB/AKT2. The segment at 126–147 (KRDALAASHEPPPEPEEITGPV) is disordered. Residues 138–147 (PEPEEITGPV) show a composition bias toward acidic residues. 5 ANK repeats span residues 147-176 (VDEE…SADT), 180-209 (FRRT…TVDF), 213-242 (LDCT…DTNV), 246-275 (LLST…EINA), and 279-308 (EGDT…DMMT). Basic and acidic residues predominate over residues 330-342 (ALEHPEPGAEHNG). Residues 330-360 (ALEHPEPGAEHNGLEGPNDSGRETPQPVPAQ) form a disordered region.

As to quaternary structure, interacts with ID3; both proteins cooperate in myoblast differentiation. Interacts with TTN/titin. Interacts (via ANK repeats) with TCAP; the interaction is direct. Interacts with TJP1 (via PDZ domains). Interacts with PML; the interaction is direct. Interacts with p53/TP53. Interacts with YBX1. Interacts with AKT2. In terms of processing, phosphorylation at Ser-99 by PKB/AKT2 in response to oxidative stress induces translocation to the nucleus and negatively regulates myoblast differentiation. In terms of tissue distribution, mostly expressed in skeletal and cardiac muscles. Found in slow fibers. Also expressed in kidney, but to a lower extent (at protein level).

The protein localises to the cytoplasm. It localises to the myofibril. It is found in the sarcomere. Its subcellular location is the i band. The protein resides in the cytosol. The protein localises to the nucleus. It localises to the PML body. Functions as a negative regulator of myocyte differentiation. May interact with both sarcoplasmic structural proteins and nuclear proteins to regulate gene expression during muscle development and in response to muscle stress. The chain is Ankyrin repeat domain-containing protein 2 (ANKRD2) from Homo sapiens (Human).